Reading from the N-terminus, the 155-residue chain is 2-C-methyl-D-erythritol 2,4-cyclodiphosphate synthase (155 aa).

A divalent metal cation contacts are provided by D8 and H10. Residues 8–10 (DVH) and 34–35 (HS) contribute to the 4-CDP-2-C-methyl-D-erythritol 2-phosphate site. H42 contacts a divalent metal cation. 4-CDP-2-C-methyl-D-erythritol 2-phosphate-binding positions include 56–58 (DIG), 61–65 (FPDKD), 132–135 (TTTE), and R142.

This sequence belongs to the IspF family. In terms of assembly, homotrimer. Requires a divalent metal cation as cofactor.

The enzyme catalyses 4-CDP-2-C-methyl-D-erythritol 2-phosphate = 2-C-methyl-D-erythritol 2,4-cyclic diphosphate + CMP. The protein operates within isoprenoid biosynthesis; isopentenyl diphosphate biosynthesis via DXP pathway; isopentenyl diphosphate from 1-deoxy-D-xylulose 5-phosphate: step 4/6. Its function is as follows. Involved in the biosynthesis of isopentenyl diphosphate (IPP) and dimethylallyl diphosphate (DMAPP), two major building blocks of isoprenoid compounds. Catalyzes the conversion of 4-diphosphocytidyl-2-C-methyl-D-erythritol 2-phosphate (CDP-ME2P) to 2-C-methyl-D-erythritol 2,4-cyclodiphosphate (ME-CPP) with a corresponding release of cytidine 5-monophosphate (CMP). The sequence is that of 2-C-methyl-D-erythritol 2,4-cyclodiphosphate synthase from Desulfatibacillum aliphaticivorans.